The sequence spans 324 residues: Beta-ketoacyl-[acyl-carrier-protein] synthase III (324 aa).

Catalysis depends on residues Cys-112 and His-250. Residues 251–255 form an ACP-binding region; it reads QANIR. The active site involves Asn-280.

This sequence belongs to the thiolase-like superfamily. FabH family. As to quaternary structure, homodimer.

It is found in the cytoplasm. It catalyses the reaction malonyl-[ACP] + acetyl-CoA + H(+) = 3-oxobutanoyl-[ACP] + CO2 + CoA. It functions in the pathway lipid metabolism; fatty acid biosynthesis. Catalyzes the condensation reaction of fatty acid synthesis by the addition to an acyl acceptor of two carbons from malonyl-ACP. Catalyzes the first condensation reaction which initiates fatty acid synthesis and may therefore play a role in governing the total rate of fatty acid production. Possesses both acetoacetyl-ACP synthase and acetyl transacylase activities. Its substrate specificity determines the biosynthesis of branched-chain and/or straight-chain of fatty acids. This is Beta-ketoacyl-[acyl-carrier-protein] synthase III from Clostridium novyi (strain NT).